A 348-amino-acid chain; its full sequence is N-acetyl-gamma-glutamyl-phosphate reductase (348 aa).

The active site involves Cys150.

It belongs to the NAGSA dehydrogenase family. Type 1 subfamily.

It is found in the cytoplasm. The enzyme catalyses N-acetyl-L-glutamate 5-semialdehyde + phosphate + NADP(+) = N-acetyl-L-glutamyl 5-phosphate + NADPH + H(+). The protein operates within amino-acid biosynthesis; L-arginine biosynthesis; N(2)-acetyl-L-ornithine from L-glutamate: step 3/4. Functionally, catalyzes the NADPH-dependent reduction of N-acetyl-5-glutamyl phosphate to yield N-acetyl-L-glutamate 5-semialdehyde. The protein is N-acetyl-gamma-glutamyl-phosphate reductase of Symbiobacterium thermophilum (strain DSM 24528 / JCM 14929 / IAM 14863 / T).